Here is a 154-residue protein sequence, read N- to C-terminus: 3-hydroxyacyl-[acyl-carrier-protein] dehydratase FabZ (154 aa).

The active site involves His60.

The protein belongs to the thioester dehydratase family. FabZ subfamily.

It is found in the cytoplasm. The enzyme catalyses a (3R)-hydroxyacyl-[ACP] = a (2E)-enoyl-[ACP] + H2O. Functionally, involved in unsaturated fatty acids biosynthesis. Catalyzes the dehydration of short chain beta-hydroxyacyl-ACPs and long chain saturated and unsaturated beta-hydroxyacyl-ACPs. The protein is 3-hydroxyacyl-[acyl-carrier-protein] dehydratase FabZ of Synechococcus sp. (strain CC9311).